We begin with the raw amino-acid sequence, 466 residues long: MSLSLWQQCLARLQDELPATEFSMWIRPLQAELSDNTLALYAPNRFVLDWVRDKYLNNINGLLNAFCGADAPQLRFEVGTKPVTQTLKTPVHNVVAPTQTTTAQPQRVAPAARSGWDNVPAPAEPTYRSNVNVKHTFDNFVEGKSNQLARAAARQVADNPGGAYNPLFLYGGTGLGKTHLLHAVGNGIMARKPNAKVVYMHSERFVQDMVKALQNNAIEEFKRYYRSVDALLIDDIQFFANKERSQEEFFHTFNALLEGNQQIILTSDRYPKEINGVEDRLKSRFGWGLTVAIEPPELETRVAILMKKADENDIRLPGEVAFFIAKRLRSNVRELEGALNRVIANANFTGRAITIDFVREALRDLLALQEKLVTIDNIQKTVAEYYKIKIADLLSKRRSRSVARPRQMAMALAKELTNHSLPEIGDAFGGRDHTTVLHACRKIEQLREESHDIKEDFSNLIRTLSS.

Residues 1-86 (MSLSLWQQCL…EVGTKPVTQT (86 aa)) are domain I, interacts with DnaA modulators. The domain II stretch occupies residues 86 to 129 (TLKTPVHNVVAPTQTTTAQPQRVAPAARSGWDNVPAPAEPTYRS). A domain III, AAA+ region region spans residues 130–346 (NVNVKHTFDN…GALNRVIANA (217 aa)). Gly-174, Gly-176, Lys-177, and Thr-178 together coordinate ATP. The interval 347 to 466 (NFTGRAITID…FSNLIRTLSS (120 aa)) is domain IV, binds dsDNA.

This sequence belongs to the DnaA family. Oligomerizes as a right-handed, spiral filament on DNA at oriC.

It localises to the cytoplasm. In terms of biological role, plays an essential role in the initiation and regulation of chromosomal replication. ATP-DnaA binds to the origin of replication (oriC) to initiate formation of the DNA replication initiation complex once per cell cycle. Binds the DnaA box (a 9 base pair repeat at the origin) and separates the double-stranded (ds)DNA. Forms a right-handed helical filament on oriC DNA; dsDNA binds to the exterior of the filament while single-stranded (ss)DNA is stabiized in the filament's interior. The ATP-DnaA-oriC complex binds and stabilizes one strand of the AT-rich DNA unwinding element (DUE), permitting loading of DNA polymerase. After initiation quickly degrades to an ADP-DnaA complex that is not apt for DNA replication. Binds acidic phospholipids. This chain is Chromosomal replication initiator protein DnaA, found in Salmonella dublin (strain CT_02021853).